A 219-amino-acid polypeptide reads, in one-letter code: Baseplate wedge protein gp11 (219 aa).

In terms of assembly, homotrimer. The gp11 trimer interacts with gp10 trimer and with the short tail fiber (STF) composed of the gp12 trimer. Part of the baseplate macromolecular complex which consists of gp5, gp5.4, gp27 (central spike complex); gp6, gp25, gp53 (inner baseplate); gp7, gp8 (intermediate baseplate); gp9, gp10, gp11, gp12 (peripheral); gp48 and gp54 (proximal region of the tail tube).

Its subcellular location is the virion. Baseplate protein that is part of the baseplate wedge and that connects the short tail fibers to the baseplate. Involved in the tail assembly. The chain is Baseplate wedge protein gp11 (11) from Enterobacteria phage T4 (Bacteriophage T4).